A 1283-amino-acid chain; its full sequence is MPNLQQTASQSQHHLYPPHLRPHHHHQQQQHHQQQQQQQHTHHQQQQQHHSDFPLPDGWDIAKDFDGKTYYIDHINKKTTWLDPRDCYTKPQTFEDCVGDELPMGWEESYDPNIGPYYINHLAQSTQLEDPRQEWKTVQEQMLSDYLSAAQDQLENKREMLDVKQQRLLWAQEEYNHLKLAASRSSLCSSSSSMSRHDPELLRADLMLARERVHQLKQELTHITNDISYTERGMNTLYSVGEKINARENGCYDIAEVQAIREEMLKVHKSLVSGEKVREELMRSLVQIKNELGRQQISEENSDLASPFDRVCVASQTDLCGSSGDNLNGGARFAEMAKTKLQYAEWRKHIKKLQQQLADHVERIEPGQLESDKDRILLIQEKEKLLNDLNSISLKSRSEEEKRVIHQTRHKLEEDLKEAYEANNTCVANRLRFHEEKQLLLDKLQEALKSTKLLEERLKSFSSESTFSISSGSSLGSLSTASSKSALSFTDIYIDPFAVDSPIDVVDLRRRSQRLFQQHQQQRLLPVHPVLQQQQSAEVTLSPRSSLSMETPPASPMKYNAGADQTPQALKEEPTYANALPAPPAYTAPPPVPISGVRARPYDLDSTVLDCMMLEAKLQKLNMGTPLNLAAAPLSPISEKPSLLDLPQEMLSRSSSTSNTRSVSAAVSNESVAGDSGVFEASRAHLPRKELAQVQIGLKYLKQEGVLVVSLERANNLLALWTASADNSQVYLRAALLPNSLTSIRTKALGDFQKPFFNDTFAVPITLDKLLTKSLQVTVVTMTGQKEEIIGTVQISMAEFNPEDSTLKWYNVLSSKFIPSFESLDIPSTSAAAAAAAVAASNAPSSGNNREESSDESTITSSQTSTLTRNQAPCMELQEQITAELLELGPLNEPECSDDDDEDEEEELDDKQLVSDVGLMNSSGMLDAYLQNMKQEFADKETNTDRAYLPEKSRGQSQLMDDRPVKRSQTFTPSAAVSKNRYNCRLNRSDSDSAMHCGVAPHTFQRGAAERRSLRFHTKAPKSVTKLHHTHIPRTSLDLELDLQAQHSKLYFLNDQIAKLQNLKEVLQKACENKDPLVAAWAIENEEFQRLVARADPAKCPEERQLQKLLMKTAKEIHKLRKTKVPKGCPDLVSFKEKITFFTRKGLSVPELPSEFTLPEANPIEEEEEEEDEDEFYNSPETAIAINTALVASSNRNKNLSEHPHRSTSGAVPKLPAPVATPAATPAATPAATPVATPAATPVVATAAQPEAKPAAAPIPVASNDAEQQRFDYVVDRNYGVEV.

Polar residues predominate over residues 1–13 (MPNLQQTASQSQH). Residues 1–59 (MPNLQQTASQSQHHLYPPHLRPHHHHQQQQHHQQQQQQQHTHHQQQQQHHSDFPLPDGW) are disordered. Residues 20–29 (LRPHHHHQQQ) show a composition bias toward basic residues. Residues 30-48 (QHHQQQQQQQHTHHQQQQQ) show a composition bias toward low complexity. 2 consecutive WW domains span residues 53–86 (FPLP…DPRD) and 100–133 (DELP…DPRQ). Coiled-coil stretches lie at residues 200–228 (ELLR…NDIS) and 334–462 (AEMA…KSFS). Positions 537 to 549 (AEVTLSPRSSLSM) are enriched in polar residues. The disordered stretch occupies residues 537-559 (AEVTLSPRSSLSMETPPASPMKY). The region spanning 690-810 (ELAQVQIGLK…NPEDSTLKWY (121 aa)) is the C2 domain. Disordered regions lie at residues 840 to 871 (ASNA…TRNQ), 887 to 910 (ELGP…ELDD), and 941 to 969 (ETNT…KRSQ). Low complexity predominate over residues 856 to 868 (ESTITSSQTSTLT). Residues 895 to 909 (ECSDDDDEDEEEELD) are compositionally biased toward acidic residues. The span at 941-965 (ETNTDRAYLPEKSRGQSQLMDDRPV) shows a compositional bias: basic and acidic residues. The stretch at 1048–1075 (SKLYFLNDQIAKLQNLKEVLQKACENKD) forms a coiled coil. A disordered region spans residues 1197-1263 (NKNLSEHPHR…PAAAPIPVAS (67 aa)). Positions 1217–1262 (APVATPAATPAATPAATPVATPAATPVVATAAQPEAKPAAAPIPVA) are enriched in low complexity.

It belongs to the WWC family. KIBRA subfamily. As to quaternary structure, forms a complex with Mer and Ex. Interacts (via domain WW 1) with Ex (via RXPPXY motif). Interacts with Mer, Sav, Hpo and Wts.

It localises to the cytoplasm. The protein localises to the apical cell membrane. Regulator of the Hippo/SWH (Sav/Wts/Hpo) signaling pathway, a signaling pathway that plays a pivotal role in organ size control and tumor suppression by restricting proliferation and promoting apoptosis. The core of this pathway is composed of a kinase cascade wherein Hippo (Hpo), in complex with its regulatory protein Salvador (Sav), phosphorylates and activates Warts (Wts) in complex with its regulatory protein Mats, which in turn phosphorylates and inactivates the Yorkie (Yki) oncoprotein. Kibra acts synergistically along with Ex and Mer to regulate the Hippo signaling pathway. In Drosophila erecta (Fruit fly), this protein is Protein kibra (Kibra).